A 551-amino-acid polypeptide reads, in one-letter code: Chaperonin GroEL 2 (551 aa).

ATP is bound by residues 30–33 (TLGP), lysine 51, 87–91 (DGTTT), glycine 415, and aspartate 496.

Belongs to the chaperonin (HSP60) family. As to quaternary structure, forms a cylinder of 14 subunits composed of two heptameric rings stacked back-to-back. Interacts with the co-chaperonin GroES.

The protein localises to the cytoplasm. The catalysed reaction is ATP + H2O + a folded polypeptide = ADP + phosphate + an unfolded polypeptide.. Its function is as follows. Together with its co-chaperonin GroES, plays an essential role in assisting protein folding. The GroEL-GroES system forms a nano-cage that allows encapsulation of the non-native substrate proteins and provides a physical environment optimized to promote and accelerate protein folding. This is Chaperonin GroEL 2 from Rhodopseudomonas palustris (strain BisB18).